A 341-amino-acid chain; its full sequence is Gibberellin 2-beta-dioxygenase 5 (341 aa).

The Fe2OG dioxygenase domain maps to Arg-187–Pro-290. Tyr-198 contributes to the 2-oxoglutarate binding site. Fe cation-binding residues include His-213, Asp-215, and His-271. Residues Arg-281 and Ser-283 each contribute to the 2-oxoglutarate site.

Belongs to the iron/ascorbate-dependent oxidoreductase family. GA2OX subfamily. L-ascorbate serves as cofactor. Fe(2+) is required as a cofactor. Expressed in roots, leaves, culms, leaf sheaths and young panicles.

The protein resides in the cytoplasm. It localises to the nucleus. It catalyses the reaction gibberellin A1 + 2-oxoglutarate + O2 = gibberellin A8 + succinate + CO2. It participates in plant hormone biosynthesis; gibberellin biosynthesis. Functionally, catalyzes the 2-beta-hydroxylation of several biologically active gibberellins (GAs), leading to the homeostatic regulation of their endogenous level. Catabolism of GAs plays a central role in plant development. In vitro, converts GA12 and GA53 to the corresponding 2-beta-hydroxylated products GA110 and GA97, respectively. The polypeptide is Gibberellin 2-beta-dioxygenase 5 (Oryza sativa subsp. japonica (Rice)).